A 156-amino-acid chain; its full sequence is 6,7-dimethyl-8-ribityllumazine synthase (156 aa).

5-amino-6-(D-ribitylamino)uracil contacts are provided by residues phenylalanine 22, 56–58 (AFE), and 80–82 (AVV). Position 85–86 (85–86 (ET)) interacts with (2S)-2-hydroxy-3-oxobutyl phosphate. Histidine 88 functions as the Proton donor in the catalytic mechanism. Phenylalanine 113 contributes to the 5-amino-6-(D-ribitylamino)uracil binding site. (2S)-2-hydroxy-3-oxobutyl phosphate is bound at residue arginine 127.

It belongs to the DMRL synthase family.

It catalyses the reaction (2S)-2-hydroxy-3-oxobutyl phosphate + 5-amino-6-(D-ribitylamino)uracil = 6,7-dimethyl-8-(1-D-ribityl)lumazine + phosphate + 2 H2O + H(+). Its pathway is cofactor biosynthesis; riboflavin biosynthesis; riboflavin from 2-hydroxy-3-oxobutyl phosphate and 5-amino-6-(D-ribitylamino)uracil: step 1/2. Catalyzes the formation of 6,7-dimethyl-8-ribityllumazine by condensation of 5-amino-6-(D-ribitylamino)uracil with 3,4-dihydroxy-2-butanone 4-phosphate. This is the penultimate step in the biosynthesis of riboflavin. The protein is 6,7-dimethyl-8-ribityllumazine synthase of Pediococcus pentosaceus (strain ATCC 25745 / CCUG 21536 / LMG 10740 / 183-1w).